Consider the following 662-residue polypeptide: Interferon-induced GTP-binding protein Mx1 (662 aa).

Met1 is modified (N-acetylmethionine). Residues 67 to 340 (DLALPAIAVI…LITHICKSLP (274 aa)) enclose the Dynamin-type G domain. The interval 77–84 (GDQSSGKS) is G1 motif. Residue 77–84 (GDQSSGKS) coordinates GTP. The tract at residues 102–104 (VTR) is G2 motif. Residues 178–181 (DLPG) form a G3 motif region. GTP is bound by residues 178–182 (DLPGI) and 247–250 (TKPD). Positions 247-250 (TKPD) are G4 motif. The tract at residues 279 to 282 (KCRG) is G5 motif. The interval 341-366 (LLENQIRESHQRITEELQKYGVDVPE) is bundle signaling element (BSE). The tract at residues 366–533 (EDENEKMFFL…HFQMEQIVYC (168 aa)) is middle domain. Residues 367–632 (DENEKMFFLI…KDTYSWLLKE (266 aa)) form a stalk region. Positions 554–557 (KKKK) are critical for lipid-binding. The GED domain maps to 574–662 (MEEIFQHLMA…ARRRLAQFPG (89 aa)).

The protein belongs to the TRAFAC class dynamin-like GTPase superfamily. Dynamin/Fzo/YdjA family. In terms of assembly, homooligomer. Oligomerizes into multimeric filamentous or ring-like structures by virtue of its stalk domain. Oligomerization is critical for GTPase activity, protein stability, and recognition of viral target structures. Interacts with TRPC1, TRPC3, TRPC4, TRPC5, TRPC6 and TRPC7. Interacts with HSPA5. Interacts with TUBB/TUBB5. Interacts with DDX39A and DDX39B. Post-translationally, ISGylated.

It localises to the cytoplasm. It is found in the endoplasmic reticulum membrane. The protein localises to the perinuclear region. Functionally, interferon-induced dynamin-like GTPase with antiviral activity. The chain is Interferon-induced GTP-binding protein Mx1 (MX1) from Pongo abelii (Sumatran orangutan).